A 293-amino-acid polypeptide reads, in one-letter code: Foldase protein PrsA 2 (293 aa).

Positions 1-20 (MKKKLILGLVMMMALFSLAA) are cleaved as a signal peptide. C21 carries N-palmitoyl cysteine lipidation. C21 is lipidated: S-diacylglycerol cysteine. Residues 135–226 (QPDITVSHIL…YGYHIIQMDK (92 aa)) enclose the PpiC domain.

It belongs to the PrsA family.

Its subcellular location is the cell membrane. The enzyme catalyses [protein]-peptidylproline (omega=180) = [protein]-peptidylproline (omega=0). Plays a major role in protein secretion by helping the post-translocational extracellular folding of several secreted proteins. The chain is Foldase protein PrsA 2 from Listeria monocytogenes serotype 4b (strain F2365).